Consider the following 281-residue polypeptide: Transcription factor bHLH79 (281 aa).

The interval 47–167 is disordered; that stretch reads FTRSEHSGNK…GQATDRHSLA (121 aa). Composition is skewed to basic and acidic residues over residues 77-88 and 138-152; these read KTRDLNSEDDSS and TEQK…DYIH. In terms of domain architecture, bHLH spans 159–209; that stretch reads QATDRHSLAERARREKISEKMTALQDIIPGCNKIIGKALVLDEIINYIQSL.

Homodimer.

Its subcellular location is the nucleus. This is Transcription factor bHLH79 (BHLH79) from Arabidopsis thaliana (Mouse-ear cress).